The primary structure comprises 227 residues: Cytochrome c oxidase subunit 2 (227 aa).

Residues 1–14 (MAYPFQMGLQDATS) are Mitochondrial intermembrane-facing. A helical transmembrane segment spans residues 15–45 (PIMEELLHFHDHTLMIVFLISSLVLYIISLM). Residues 46 to 59 (LTTKLTHTSTMDAQ) are Mitochondrial matrix-facing. The helical transmembrane segment at 60–87 (EVETIWTILPAIILILIALPSLRILYMM) threads the bilayer. Residues 88 to 227 (DEINNPSLTV…HFEKWSASLL (140 aa)) lie on the Mitochondrial intermembrane side of the membrane. Positions 161, 196, 198, 200, 204, and 207 each coordinate Cu cation. Residue Glu-198 participates in Mg(2+) binding.

It belongs to the cytochrome c oxidase subunit 2 family. As to quaternary structure, component of the cytochrome c oxidase (complex IV, CIV), a multisubunit enzyme composed of 14 subunits. The complex is composed of a catalytic core of 3 subunits MT-CO1, MT-CO2 and MT-CO3, encoded in the mitochondrial DNA, and 11 supernumerary subunits COX4I, COX5A, COX5B, COX6A, COX6B, COX6C, COX7A, COX7B, COX7C, COX8 and NDUFA4, which are encoded in the nuclear genome. The complex exists as a monomer or a dimer and forms supercomplexes (SCs) in the inner mitochondrial membrane with NADH-ubiquinone oxidoreductase (complex I, CI) and ubiquinol-cytochrome c oxidoreductase (cytochrome b-c1 complex, complex III, CIII), resulting in different assemblies (supercomplex SCI(1)III(2)IV(1) and megacomplex MCI(2)III(2)IV(2)). Found in a complex with TMEM177, COA6, COX18, COX20, SCO1 and SCO2. Interacts with TMEM177 in a COX20-dependent manner. Interacts with COX20. Interacts with COX16. Cu cation serves as cofactor.

It localises to the mitochondrion inner membrane. It carries out the reaction 4 Fe(II)-[cytochrome c] + O2 + 8 H(+)(in) = 4 Fe(III)-[cytochrome c] + 2 H2O + 4 H(+)(out). Functionally, component of the cytochrome c oxidase, the last enzyme in the mitochondrial electron transport chain which drives oxidative phosphorylation. The respiratory chain contains 3 multisubunit complexes succinate dehydrogenase (complex II, CII), ubiquinol-cytochrome c oxidoreductase (cytochrome b-c1 complex, complex III, CIII) and cytochrome c oxidase (complex IV, CIV), that cooperate to transfer electrons derived from NADH and succinate to molecular oxygen, creating an electrochemical gradient over the inner membrane that drives transmembrane transport and the ATP synthase. Cytochrome c oxidase is the component of the respiratory chain that catalyzes the reduction of oxygen to water. Electrons originating from reduced cytochrome c in the intermembrane space (IMS) are transferred via the dinuclear copper A center (CU(A)) of subunit 2 and heme A of subunit 1 to the active site in subunit 1, a binuclear center (BNC) formed by heme A3 and copper B (CU(B)). The BNC reduces molecular oxygen to 2 water molecules using 4 electrons from cytochrome c in the IMS and 4 protons from the mitochondrial matrix. This is Cytochrome c oxidase subunit 2 (MT-CO2) from Ailurus fulgens (Himalayan red panda).